The primary structure comprises 483 residues: V-type proton ATPase subunit H (483 aa).

Ser-483 carries the phosphoserine modification.

This sequence belongs to the V-ATPase H subunit family. V-ATPase is a heteromultimeric enzyme made up of two complexes: the ATP-hydrolytic V1 complex and the proton translocation V0 complex. The V1 complex consists of three catalytic AB heterodimers that form a heterohexamer, three peripheral stalks each consisting of EG heterodimers, one central rotor including subunits D and F, and the regulatory subunits C and H. The proton translocation complex V0 consists of the proton transport subunit a, a ring of proteolipid subunits c9c'', rotary subunit d, subunits e and f, and the accessory subunits ATP6AP1/Ac45 and ATP6AP2/PRR. Interacts with AP2M1.

It localises to the cytoplasmic vesicle. Its subcellular location is the clathrin-coated vesicle membrane. In terms of biological role, subunit of the V1 complex of vacuolar(H+)-ATPase (V-ATPase), a multisubunit enzyme composed of a peripheral complex (V1) that hydrolyzes ATP and a membrane integral complex (V0) that translocates protons. V-ATPase is responsible for acidifying and maintaining the pH of intracellular compartments and in some cell types, is targeted to the plasma membrane, where it is responsible for acidifying the extracellular environment. Subunit H is essential for V-ATPase activity, but not for the assembly of the complex. Involved in the endocytosis mediated by clathrin-coated pits, required for the formation of endosomes. The sequence is that of V-type proton ATPase subunit H (ATP6V1H) from Sus scrofa (Pig).